A 434-amino-acid polypeptide reads, in one-letter code: ATP-dependent RNA helicase sub2 (434 aa).

A Q motif motif is present at residues 59-87 (TGFRDFLLKGELLRAITDCGFEHPSEVQQ). Residues 90-265 (IPTAILNVDV…KKFMRNPLEV (176 aa)) form the Helicase ATP-binding domain. 103–110 (AKSGLGKT) is a binding site for ATP. The DECD box signature appears at 212 to 215 (DECD). The Helicase C-terminal domain maps to 293 to 430 (KLNELLDSLE…EYPEEGVDSS (138 aa)).

The protein belongs to the DEAD box helicase family. DECD subfamily.

The protein resides in the nucleus. It carries out the reaction ATP + H2O = ADP + phosphate + H(+). In terms of biological role, ATP-binding RNA helicase involved in transcription elongation and required for the export of mRNA out of the nucleus. SUB2 also plays a role in pre-mRNA splicing and spliceosome assembly. May be involved in rDNA and telomeric silencing, and maintenance of genome integrity. The polypeptide is ATP-dependent RNA helicase sub2 (sub2) (Emericella nidulans (strain FGSC A4 / ATCC 38163 / CBS 112.46 / NRRL 194 / M139) (Aspergillus nidulans)).